The sequence spans 115 residues: MAPSVPLVLLLVLLLSLAETPASAPAHQGRGGWTLNSAGYLLGPVLHLPQMGDQDRKRETALEILDLWKAIDGLPYSHPLQPSKRNVMEAFAKPEIGDLDVLSKKIPKEEDVLKS.

Positions 1-23 (MAPSVPLVLLLVLLLSLAETPAS) are cleaved as a signal peptide. A propeptide spanning residues 86-115 (NVMEAFAKPEIGDLDVLSKKIPKEEDVLKS) is cleaved from the precursor.

This sequence belongs to the galanin family. Hypothalamus and pituitary gland.

It localises to the secreted. Hypothalamic neuropeptide which binds to the G-protein-coupled galanin receptors (GALR1, GALR2 and GALR3). Involved in a large number of putative physiological functions in CNS homeostatic processes, including the regulation of gonadotropin-releasing hormone secretion. Functionally, exhibits potent and dose-dependent vasoconstrictor and anti-edema activity in the cutaneous microvasculature, a physiologic effects which does not appear to be mediated via GALR1 or GALR2. Exhibits antimicrobial activity against Gram-negative bacterias, inducing bacterial membrane blebbing. This chain is Galanin-like peptide (GALP), found in Macaca nemestrina (Pig-tailed macaque).